A 388-amino-acid polypeptide reads, in one-letter code: Beta-hexosaminidase LpqI (388 aa).

Positions 1–19 are cleaved as a signal peptide; that stretch reads MAFPRTLAILAAAAALVVA. Cys-20 carries the N-palmitoyl cysteine lipid modification. Cys-20 is lipidated: S-diacylglycerol cysteine. Substrate contacts are provided by residues Asp-123, Arg-131, Arg-193, and 223 to 224; that span reads KH. The active-site Proton donor/acceptor is His-236. The Nucleophile role is filled by Asp-311.

This sequence belongs to the glycosyl hydrolase 3 family.

The protein resides in the cell inner membrane. It catalyses the reaction Hydrolysis of terminal non-reducing N-acetyl-D-hexosamine residues in N-acetyl-beta-D-hexosaminides.. Its pathway is cell wall biogenesis; peptidoglycan recycling. Functionally, plays a role in peptidoglycan recycling by cleaving the terminal beta-1,4-linked N-acetylglucosamine (GlcNAc) from peptidoglycan fragments. Acts as a regulator for GlcNAc-MurNAc levels by cleaving disaccharides and allowing the breakdown of MurNAc. This Mycobacterium tuberculosis (strain ATCC 25618 / H37Rv) protein is Beta-hexosaminidase LpqI.